A 161-amino-acid polypeptide reads, in one-letter code: NADH-quinone oxidoreductase subunit I (161 aa).

4Fe-4S ferredoxin-type domains lie at 52 to 82 and 92 to 121; these read LRRYPDGEERCIACKLCEAICPAQAITIEAK and TKYDIDMTKCIYCGLCQEACPVDAIVEGPN. [4Fe-4S] cluster-binding residues include cysteine 62, cysteine 65, cysteine 68, cysteine 72, cysteine 101, cysteine 104, cysteine 107, and cysteine 111.

Belongs to the complex I 23 kDa subunit family. NDH-1 is composed of 14 different subunits. Subunits NuoA, H, J, K, L, M, N constitute the membrane sector of the complex. [4Fe-4S] cluster serves as cofactor.

Its subcellular location is the cell inner membrane. It carries out the reaction a quinone + NADH + 5 H(+)(in) = a quinol + NAD(+) + 4 H(+)(out). Functionally, NDH-1 shuttles electrons from NADH, via FMN and iron-sulfur (Fe-S) centers, to quinones in the respiratory chain. The immediate electron acceptor for the enzyme in this species is believed to be ubiquinone. Couples the redox reaction to proton translocation (for every two electrons transferred, four hydrogen ions are translocated across the cytoplasmic membrane), and thus conserves the redox energy in a proton gradient. This is NADH-quinone oxidoreductase subunit I from Orientia tsutsugamushi (strain Boryong) (Rickettsia tsutsugamushi).